The chain runs to 461 residues: Tubulin gamma chain (461 aa).

142–148 (AGGTGSG) provides a ligand contact to GTP.

It belongs to the tubulin family.

The protein localises to the cytoplasm. It localises to the cytoskeleton. The protein resides in the microtubule organizing center. It is found in the spindle pole body. Tubulin is the major constituent of microtubules. The gamma chain is found at microtubule organizing centers (MTOC) such as the spindle poles or the centrosome, suggesting that it is involved in the minus-end nucleation of microtubule assembly. The polypeptide is Tubulin gamma chain (tbg) (Neurospora crassa (strain ATCC 24698 / 74-OR23-1A / CBS 708.71 / DSM 1257 / FGSC 987)).